A 360-amino-acid polypeptide reads, in one-letter code: Aminomethyltransferase (360 aa).

This sequence belongs to the GcvT family. In terms of assembly, the glycine cleavage system is composed of four proteins: P, T, L and H.

It catalyses the reaction N(6)-[(R)-S(8)-aminomethyldihydrolipoyl]-L-lysyl-[protein] + (6S)-5,6,7,8-tetrahydrofolate = N(6)-[(R)-dihydrolipoyl]-L-lysyl-[protein] + (6R)-5,10-methylene-5,6,7,8-tetrahydrofolate + NH4(+). Its function is as follows. The glycine cleavage system catalyzes the degradation of glycine. In Pseudomonas aeruginosa (strain ATCC 15692 / DSM 22644 / CIP 104116 / JCM 14847 / LMG 12228 / 1C / PRS 101 / PAO1), this protein is Aminomethyltransferase.